The sequence spans 224 residues: 7-cyano-7-deazaguanine synthase (224 aa).

10–20 (LSGGLDSATVV) is an ATP binding site. 4 residues coordinate Zn(2+): Cys-189, Cys-199, Cys-202, and Cys-205.

It belongs to the QueC family. Zn(2+) is required as a cofactor.

It catalyses the reaction 7-carboxy-7-deazaguanine + NH4(+) + ATP = 7-cyano-7-deazaguanine + ADP + phosphate + H2O + H(+). Its pathway is purine metabolism; 7-cyano-7-deazaguanine biosynthesis. Functionally, catalyzes the ATP-dependent conversion of 7-carboxy-7-deazaguanine (CDG) to 7-cyano-7-deazaguanine (preQ(0)). This Pseudomonas putida (strain ATCC 700007 / DSM 6899 / JCM 31910 / BCRC 17059 / LMG 24140 / F1) protein is 7-cyano-7-deazaguanine synthase.